Reading from the N-terminus, the 423-residue chain is Histidine--tRNA ligase (423 aa).

It belongs to the class-II aminoacyl-tRNA synthetase family. Homodimer.

It localises to the cytoplasm. The enzyme catalyses tRNA(His) + L-histidine + ATP = L-histidyl-tRNA(His) + AMP + diphosphate + H(+). In Halorhodospira halophila (strain DSM 244 / SL1) (Ectothiorhodospira halophila (strain DSM 244 / SL1)), this protein is Histidine--tRNA ligase.